The primary structure comprises 407 residues: S-adenosylmethionine synthase (407 aa).

Histidine 15 provides a ligand contact to ATP. Aspartate 17 is a Mg(2+) binding site. Glutamate 43 is a K(+) binding site. Residues glutamate 56 and glutamine 100 each coordinate L-methionine. A flexible loop region spans residues 100–110 (QSPDIAQGVDE). Residues 171–173 (DGK), 248–249 (KF), aspartate 257, 263–264 (RK), alanine 280, and lysine 284 each bind ATP. Residue aspartate 257 coordinates L-methionine. Lysine 288 contacts L-methionine.

The protein belongs to the AdoMet synthase family. As to quaternary structure, homotetramer; dimer of dimers. It depends on Mg(2+) as a cofactor. K(+) is required as a cofactor.

It is found in the cytoplasm. It catalyses the reaction L-methionine + ATP + H2O = S-adenosyl-L-methionine + phosphate + diphosphate. It functions in the pathway amino-acid biosynthesis; S-adenosyl-L-methionine biosynthesis; S-adenosyl-L-methionine from L-methionine: step 1/1. Functionally, catalyzes the formation of S-adenosylmethionine (AdoMet) from methionine and ATP. The overall synthetic reaction is composed of two sequential steps, AdoMet formation and the subsequent tripolyphosphate hydrolysis which occurs prior to release of AdoMet from the enzyme. In Synechococcus sp. (strain RCC307), this protein is S-adenosylmethionine synthase.